Reading from the N-terminus, the 239-residue chain is RNA polymerase sigma-35 factor (239 aa).

Residues 1-27 constitute a propeptide that is removed on maturation; that stretch reads MMKLKFYLVYLWYKVLLKLGIKTDEIY. Positions 86 to 99 match the Polymerase core binding motif; it reads DLISIGTIGLIKAV. A DNA-binding region (H-T-H motif) is located at residues 206-225; it reads QKDVADMLGISQSYISRLEK.

Belongs to the sigma-70 factor family. Proteolytically cleaved in the N-terminus probably by a SpoIIGA homolog to yield the active peptide.

Its function is as follows. Sigma factors are initiation factors that promote the attachment of RNA polymerase to specific initiation sites and are then released. This sigma factor directs the transcription of crystal protein genes, a sporulation-regulated event. This Bacillus anthracis protein is RNA polymerase sigma-35 factor (sigE).